The following is a 446-amino-acid chain: Serine decarboxylase 3 (446 aa).

Residue histidine 162 participates in substrate binding. The residue at position 274 (lysine 274) is an N6-(pyridoxal phosphate)lysine.

Belongs to the group II decarboxylase family. It depends on pyridoxal 5'-phosphate as a cofactor.

It catalyses the reaction L-serine + H(+) = ethanolamine + CO2. In terms of biological role, catalyzes the biosynthesis of ethanolamine from serine. Decarboxylation of free serine is the major source of ethanolamine production in plants and ethanolamine metabolism is crucial for the synthesis of choline, phosphatidylethanolamine (PE) and phosphatidylcholine (PC), and thus for plant growth. The polypeptide is Serine decarboxylase 3 (Oryza sativa subsp. japonica (Rice)).